The chain runs to 262 residues: Tryptophan synthase alpha chain (262 aa).

Residues Glu48 and Asp59 each act as proton acceptor in the active site.

The protein belongs to the TrpA family. In terms of assembly, tetramer of two alpha and two beta chains.

It catalyses the reaction (1S,2R)-1-C-(indol-3-yl)glycerol 3-phosphate + L-serine = D-glyceraldehyde 3-phosphate + L-tryptophan + H2O. The protein operates within amino-acid biosynthesis; L-tryptophan biosynthesis; L-tryptophan from chorismate: step 5/5. Functionally, the alpha subunit is responsible for the aldol cleavage of indoleglycerol phosphate to indole and glyceraldehyde 3-phosphate. The sequence is that of Tryptophan synthase alpha chain from Helicobacter pylori (strain HPAG1).